The chain runs to 101 residues: AFA-III adhesin operon regulatory protein (101 aa).

Functionally, regulates the transcription of genes involved in the biosynthesis of afimbrial adhesin-III. The polypeptide is AFA-III adhesin operon regulatory protein (afaA) (Escherichia coli).